Here is a 706-residue protein sequence, read N- to C-terminus: Polyribonucleotide nucleotidyltransferase (706 aa).

Aspartate 487 and aspartate 493 together coordinate Mg(2+). The region spanning 553-612 (PRLFTMKISQDKIRDVIGKGGETIRSITAETGTEINIAEDGTITIAATTQEAGDAAKKRI) is the KH domain. The S1 motif domain occupies 622-692 (GKVYEGTVVK…DRGRVRLSIK (71 aa)).

This sequence belongs to the polyribonucleotide nucleotidyltransferase family. It depends on Mg(2+) as a cofactor.

Its subcellular location is the cytoplasm. It catalyses the reaction RNA(n+1) + phosphate = RNA(n) + a ribonucleoside 5'-diphosphate. Its function is as follows. Involved in mRNA degradation. Catalyzes the phosphorolysis of single-stranded polyribonucleotides processively in the 3'- to 5'-direction. The polypeptide is Polyribonucleotide nucleotidyltransferase (Neisseria gonorrhoeae (strain ATCC 700825 / FA 1090)).